A 184-amino-acid polypeptide reads, in one-letter code: Ribosome-recycling factor (184 aa).

It belongs to the RRF family.

The protein resides in the cytoplasm. Responsible for the release of ribosomes from messenger RNA at the termination of protein biosynthesis. May increase the efficiency of translation by recycling ribosomes from one round of translation to another. In Acinetobacter baumannii (strain SDF), this protein is Ribosome-recycling factor.